Reading from the N-terminus, the 648-residue chain is Biosynthetic arginine decarboxylase (648 aa).

K109 bears the N6-(pyridoxal phosphate)lysine mark. Residue 291–301 coordinates substrate; it reads LDVGGGLGVDY.

This sequence belongs to the Orn/Lys/Arg decarboxylase class-II family. SpeA subfamily. Mg(2+) is required as a cofactor. The cofactor is pyridoxal 5'-phosphate.

It catalyses the reaction L-arginine + H(+) = agmatine + CO2. Its pathway is amine and polyamine biosynthesis; agmatine biosynthesis; agmatine from L-arginine: step 1/1. Functionally, catalyzes the biosynthesis of agmatine from arginine. The polypeptide is Biosynthetic arginine decarboxylase (Prochlorococcus marinus (strain MIT 9303)).